The following is a 239-amino-acid chain: uncharacterized protein (239 aa).

This is an uncharacterized protein from Bacillus subtilis (strain 168).